A 169-amino-acid polypeptide reads, in one-letter code: NAD(P)H-quinone oxidoreductase subunit J, chloroplastic (169 aa).

The protein belongs to the complex I 30 kDa subunit family. NDH is composed of at least 16 different subunits, 5 of which are encoded in the nucleus.

Its subcellular location is the plastid. The protein resides in the chloroplast thylakoid membrane. The catalysed reaction is a plastoquinone + NADH + (n+1) H(+)(in) = a plastoquinol + NAD(+) + n H(+)(out). It catalyses the reaction a plastoquinone + NADPH + (n+1) H(+)(in) = a plastoquinol + NADP(+) + n H(+)(out). Its function is as follows. NDH shuttles electrons from NAD(P)H:plastoquinone, via FMN and iron-sulfur (Fe-S) centers, to quinones in the photosynthetic chain and possibly in a chloroplast respiratory chain. The immediate electron acceptor for the enzyme in this species is believed to be plastoquinone. Couples the redox reaction to proton translocation, and thus conserves the redox energy in a proton gradient. The polypeptide is NAD(P)H-quinone oxidoreductase subunit J, chloroplastic (Anthoceros angustus (Hornwort)).